Here is a 95-residue protein sequence, read N- to C-terminus: Large ribosomal subunit protein uL23c (95 aa).

It belongs to the universal ribosomal protein uL23 family. Part of the 50S ribosomal subunit.

It is found in the plastid. Its subcellular location is the chloroplast. Functionally, binds to 23S rRNA. The protein is Large ribosomal subunit protein uL23c (rpl23) of Guillardia theta (Cryptophyte).